The following is a 172-amino-acid chain: Translation initiation factor IF-3 (172 aa).

It belongs to the IF-3 family. As to quaternary structure, monomer.

The protein localises to the cytoplasm. IF-3 binds to the 30S ribosomal subunit and shifts the equilibrium between 70S ribosomes and their 50S and 30S subunits in favor of the free subunits, thus enhancing the availability of 30S subunits on which protein synthesis initiation begins. This chain is Translation initiation factor IF-3, found in Geobacter metallireducens (strain ATCC 53774 / DSM 7210 / GS-15).